Consider the following 346-residue polypeptide: Biotin synthase (346 aa).

Positions 38 to 256 constitute a Radical SAM core domain; it reads RQVQVSTLLS…IAVARIMMPT (219 aa). [4Fe-4S] cluster is bound by residues Cys-53, Cys-57, and Cys-60. Residues Cys-97, Cys-128, Cys-188, and Arg-260 each coordinate [2Fe-2S] cluster.

The protein belongs to the radical SAM superfamily. Biotin synthase family. In terms of assembly, homodimer. It depends on [4Fe-4S] cluster as a cofactor. The cofactor is [2Fe-2S] cluster.

The catalysed reaction is (4R,5S)-dethiobiotin + (sulfur carrier)-SH + 2 reduced [2Fe-2S]-[ferredoxin] + 2 S-adenosyl-L-methionine = (sulfur carrier)-H + biotin + 2 5'-deoxyadenosine + 2 L-methionine + 2 oxidized [2Fe-2S]-[ferredoxin]. It participates in cofactor biosynthesis; biotin biosynthesis; biotin from 7,8-diaminononanoate: step 2/2. Its function is as follows. Catalyzes the conversion of dethiobiotin (DTB) to biotin by the insertion of a sulfur atom into dethiobiotin via a radical-based mechanism. The protein is Biotin synthase of Escherichia coli (strain SE11).